Reading from the N-terminus, the 266-residue chain is GTP-binding protein Rhes (266 aa).

26–33 contributes to the GTP binding site; it reads GASRVGKS. An Effector region motif is present at residues 48-56; it reads YTPTIEDFH. GTP-binding positions include 73–77 and 140–143; these read DTSGN and NKND. The interaction with GNB1, GNB2 and GNB3 stretch occupies residues 189 to 235; it reads MAKLPHEMSPALHHKISVQYGDAFHPRPFCMRRTKVAGAYGMVSPFA. The residue at position 263 (cysteine 263) is a Cysteine methyl ester. Cysteine 263 carries the S-farnesyl cysteine lipid modification. Residues 264–266 constitute a propeptide, removed in mature form; sequence SIQ.

This sequence belongs to the small GTPase superfamily. RasD family. Monomer (Potential). Interacts with PIK3CA and UBE2I. Interacts with GNB1, GNB2 and GNB3. Farnesylated. Farnesylation is required for membrane targeting. In terms of tissue distribution, highly expressed in brain; prominently in the striatum and weakly in kidney, thyroid, lung, heart and testis. Not expressed in liver. Expressed in pancreatic cell lines and in a embryonic stem cell line.

The protein resides in the cell membrane. Its function is as follows. GTPase signaling protein that binds to and hydrolyzes GTP. Regulates signaling pathways involving G-proteins-coupled receptor and heterotrimeric proteins such as GNB1, GNB2 and GNB3. May be involved in selected striatal competencies, mainly locomotor activity and motor coordination. The polypeptide is GTP-binding protein Rhes (Rasd2) (Mus musculus (Mouse)).